The chain runs to 1153 residues: uncharacterized protein (1153 aa).

An N-terminal signal peptide occupies residues 1-18; the sequence is MNKNIFITLLISLLLLSG. Cys-19 carries the N-palmitoyl cysteine lipid modification. The S-diacylglycerol cysteine moiety is linked to residue Cys-19. Helical transmembrane passes span 289–309, 393–413, 422–442, and 457–477; these read VSAI…IGNI, LGFI…FLIF, ALIT…FMLF, and ISYA…SMII.

It belongs to the TrbL/VirB6 family.

The protein localises to the cell membrane. This is an uncharacterized protein from Rickettsia conorii (strain ATCC VR-613 / Malish 7).